Reading from the N-terminus, the 429-residue chain is Glucose-1-phosphate adenylyltransferase (429 aa).

Residues tyrosine 116, glycine 181, 196–197 (EK), and serine 214 each bind alpha-D-glucose 1-phosphate.

This sequence belongs to the bacterial/plant glucose-1-phosphate adenylyltransferase family. Homotetramer.

It catalyses the reaction alpha-D-glucose 1-phosphate + ATP + H(+) = ADP-alpha-D-glucose + diphosphate. It functions in the pathway glycan biosynthesis; glycogen biosynthesis. In terms of biological role, involved in the biosynthesis of ADP-glucose, a building block required for the elongation reactions to produce glycogen. Catalyzes the reaction between ATP and alpha-D-glucose 1-phosphate (G1P) to produce pyrophosphate and ADP-Glc. The protein is Glucose-1-phosphate adenylyltransferase of Paramagnetospirillum magneticum (strain ATCC 700264 / AMB-1) (Magnetospirillum magneticum).